The primary structure comprises 194 residues: AN1-type zinc finger protein 2A (194 aa).

2 AN1-type zinc fingers span residues 4-52 (PDLG…QKDV) and 94-142 (KIFT…RPTI). 16 residues coordinate Zn(2+): Cys10, Cys15, Cys25, Cys28, Cys33, His36, His42, Cys44, Cys100, Cys105, Cys115, Cys118, Cys123, His126, His132, and Cys134. A disordered region spans residues 145 to 164 (GCSPVTASESKPSGDPHPGS).

Its subcellular location is the cytoplasm. The protein localises to the nucleus. This Pongo abelii (Sumatran orangutan) protein is AN1-type zinc finger protein 2A (ZFAND2A).